The chain runs to 225 residues: 2-C-methyl-D-erythritol 4-phosphate cytidylyltransferase (225 aa).

This sequence belongs to the IspD/TarI cytidylyltransferase family. IspD subfamily.

It catalyses the reaction 2-C-methyl-D-erythritol 4-phosphate + CTP + H(+) = 4-CDP-2-C-methyl-D-erythritol + diphosphate. The protein operates within isoprenoid biosynthesis; isopentenyl diphosphate biosynthesis via DXP pathway; isopentenyl diphosphate from 1-deoxy-D-xylulose 5-phosphate: step 2/6. Functionally, catalyzes the formation of 4-diphosphocytidyl-2-C-methyl-D-erythritol from CTP and 2-C-methyl-D-erythritol 4-phosphate (MEP). This chain is 2-C-methyl-D-erythritol 4-phosphate cytidylyltransferase, found in Prochlorococcus marinus (strain MIT 9313).